The following is an 80-amino-acid chain: Protein Vpy (80 aa).

The sequence is that of Protein Vpy (vpy) from Bos taurus (Bovine).